A 153-amino-acid chain; its full sequence is Pheromone-binding protein Gp-9 (153 aa).

Positions 1–19 (MKTFVLHIFIFALVAFASA) are cleaved as a signal peptide. Cystine bridges form between Cys37/Cys77, Cys73/Cys129, and Cys118/Cys138.

The protein belongs to the PBP/GOBP family. In terms of assembly, homodimer.

It localises to the secreted. Colony queen number, a major feature of social organization, is associated with worker genotype for Gp-9. Colonies are headed by either a single reproductive queen (monogyne form) or multiple queens (polygyne form). Differences in worker Gp-9 genotypes between social forms may cause differences in workers' abilities to recognize queens and regulate their numbers. In Solenopsis n. sp. (strain JP-2002) (Fire ant), this protein is Pheromone-binding protein Gp-9.